The chain runs to 298 residues: Quinolinate synthase (298 aa).

Iminosuccinate is bound by residues histidine 19 and serine 36. Cysteine 81 serves as a coordination point for [4Fe-4S] cluster. Iminosuccinate is bound by residues 107 to 109 (YVN) and serine 124. [4Fe-4S] cluster is bound at residue cysteine 168. Iminosuccinate-binding positions include 193-195 (HPE) and threonine 210. Residue cysteine 254 participates in [4Fe-4S] cluster binding.

It belongs to the quinolinate synthase family. Type 2 subfamily. [4Fe-4S] cluster serves as cofactor.

Its subcellular location is the cytoplasm. The enzyme catalyses iminosuccinate + dihydroxyacetone phosphate = quinolinate + phosphate + 2 H2O + H(+). The protein operates within cofactor biosynthesis; NAD(+) biosynthesis; quinolinate from iminoaspartate: step 1/1. Its function is as follows. Catalyzes the condensation of iminoaspartate with dihydroxyacetone phosphate to form quinolinate. This Thermotoga sp. (strain RQ2) protein is Quinolinate synthase.